A 60-amino-acid chain; its full sequence is Large ribosomal subunit protein uL29 (60 aa).

This sequence belongs to the universal ribosomal protein uL29 family.

The polypeptide is Large ribosomal subunit protein uL29 (Fusobacterium nucleatum subsp. nucleatum (strain ATCC 25586 / DSM 15643 / BCRC 10681 / CIP 101130 / JCM 8532 / KCTC 2640 / LMG 13131 / VPI 4355)).